The sequence spans 589 residues: Early growth response protein 4 (589 aa).

Disordered stretches follow at residues 29-101 (GSAL…HSRR), 383-411 (AEGL…ASTQ), and 436-466 (PGSS…GRRG). A compositionally biased stretch (pro residues) spans 76–86 (PLPPASPPPAR). Residues 92–101 (ARPRAPHSRR) are compositionally biased toward basic residues. A compositionally biased stretch (gly residues) spans 395–404 (GEGGSSGDGG). The span at 444-454 (PPVPPPPPTPF) shows a compositional bias: pro residues. 3 consecutive C2H2-type zinc fingers follow at residues 483-507 (FACP…LRIH), 513-535 (FQCR…VRTH), and 541-563 (FACD…SKVH).

The protein belongs to the EGR C2H2-type zinc-finger protein family.

It localises to the nucleus. Its function is as follows. Transcriptional regulator. Recognizes and binds to the DNA sequence 5'-GCGGGGGCG-3' (GSG). Activates the transcription of target genes whose products are required for mitogenesis and differentiation. The chain is Early growth response protein 4 (EGR4) from Homo sapiens (Human).